The sequence spans 288 residues: Ribosomal RNA small subunit methyltransferase A (288 aa).

Residues Asn18, Leu20, Gly45, Glu66, Asp91, and Asn118 each coordinate S-adenosyl-L-methionine.

The protein belongs to the class I-like SAM-binding methyltransferase superfamily. rRNA adenine N(6)-methyltransferase family. RsmA subfamily.

Its subcellular location is the cytoplasm. The enzyme catalyses adenosine(1518)/adenosine(1519) in 16S rRNA + 4 S-adenosyl-L-methionine = N(6)-dimethyladenosine(1518)/N(6)-dimethyladenosine(1519) in 16S rRNA + 4 S-adenosyl-L-homocysteine + 4 H(+). Its function is as follows. Specifically dimethylates two adjacent adenosines (A1518 and A1519) in the loop of a conserved hairpin near the 3'-end of 16S rRNA in the 30S particle. May play a critical role in biogenesis of 30S subunits. This is Ribosomal RNA small subunit methyltransferase A from Mannheimia succiniciproducens (strain KCTC 0769BP / MBEL55E).